The sequence spans 267 residues: MVNLMNIKDIKLNADETKTTKAILKASFDMWLDIVEADVVIVGAGPSGLTCARYLAKEGFKVVVLERHLAFGGGTWGGGMGFPYIVVEEPADELLREVGIKLIDMGDGYYVADSVEVPAKLAVAAMDAGAKILTGIVVEDLILREDGVAGVVINSYAIERAGLHIDPLTIRSKVVVDATGHEASIVNILVKKNKLEADVPGEKSMWAEKGENALLRNTREVYPNLFVCGMAANASHGGYRMGAIFGGMYLSGKLCAELITEKLKNKE.

Residues Ser-47, Glu-66–Arg-67, Gly-74, Val-138, and His-164–Asp-166 each bind NAD(+). Residues Asp-166 and His-181 each contribute to the Fe cation site. NAD(+) is bound by residues Ser-184 and Met-230. Arg-240 contributes to the glycine binding site.

Belongs to the THI4 family. Homooctamer; tetramer of dimers. It depends on Fe(2+) as a cofactor.

It carries out the reaction hydrogen sulfide + glycine + NAD(+) = ADP-5-ethyl-4-methylthiazole-2-carboxylate + nicotinamide + 3 H2O + H(+). The protein operates within cofactor biosynthesis; thiamine diphosphate biosynthesis. Its function is as follows. Involved in the biosynthesis of the thiazole moiety of thiamine. Catalyzes the conversion of NAD and glycine to adenosine diphosphate 5-(2-hydroxyethyl)-4-methylthiazole-2-carboxylate (ADT), an adenylated thiazole intermediate, using free sulfide as a source of sulfur. This chain is Thiamine thiazole synthase, found in Methanocaldococcus jannaschii (strain ATCC 43067 / DSM 2661 / JAL-1 / JCM 10045 / NBRC 100440) (Methanococcus jannaschii).